The following is a 118-amino-acid chain: Large ribosomal subunit protein bL20 (118 aa).

The protein belongs to the bacterial ribosomal protein bL20 family.

In terms of biological role, binds directly to 23S ribosomal RNA and is necessary for the in vitro assembly process of the 50S ribosomal subunit. It is not involved in the protein synthesizing functions of that subunit. In Erwinia tasmaniensis (strain DSM 17950 / CFBP 7177 / CIP 109463 / NCPPB 4357 / Et1/99), this protein is Large ribosomal subunit protein bL20.